Here is a 746-residue protein sequence, read N- to C-terminus: UvrABC system protein C (746 aa).

A GIY-YIG domain is found at 18–97 (AKPGVYKWRD…IKEFDPRFNV (80 aa)). One can recognise a UVR domain in the interval 211–246 (RPYIAQLTRDMKEASAELEFEKAARLRDQIQMLETV). The disordered stretch occupies residues 557 to 577 (ANGNDNGEGGSDISGKGHAVP).

It belongs to the UvrC family. Interacts with UvrB in an incision complex.

The protein localises to the cytoplasm. Functionally, the UvrABC repair system catalyzes the recognition and processing of DNA lesions. UvrC both incises the 5' and 3' sides of the lesion. The N-terminal half is responsible for the 3' incision and the C-terminal half is responsible for the 5' incision. This is UvrABC system protein C from Bifidobacterium longum (strain NCC 2705).